The chain runs to 514 residues: Ammonium transporter 1 member 2 (514 aa).

Helical transmembrane passes span 56–76 (LLFS…LCAG), 91–111 (VLDA…FAFG), 140–160 (FFLY…GSIA), 165–185 (FVAY…TVSH), 212–232 (FAGS…GALV), 257–277 (VVLG…GSFL), 291–313 (GQWS…AALT), 328–348 (IDVC…CAVV), 351–371 (WAAI…NLLA), 380–400 (LEAA…TGLF), and 431–451 (IVQI…LFYG). A Phosphothreonine modification is found at threonine 472.

This sequence belongs to the ammonia transporter channel (TC 1.A.11.2) family. High expression in root.

It localises to the membrane. Functionally, ammonium transporter probably involved in ammonium uptake from the soil. The protein is Ammonium transporter 1 member 2 (AMT1-2) of Arabidopsis thaliana (Mouse-ear cress).